The primary structure comprises 292 residues: Cbb3-type cytochrome c oxidase subunit CcoP (292 aa).

The next 2 membrane-spanning stretches (helical) occupy residues 11 to 31 (FGLIAALVILVLTIYESSSLI) and 62 to 82 (VGWIASFMCTIVWAFWYFFFG). Cytochrome c domains lie at 116–195 (ELVD…MAEI) and 205–288 (QLID…QSLK). Positions 129, 132, 133, 174, 219, 222, 223, and 264 each coordinate heme c.

Belongs to the CcoP / FixP family. In terms of assembly, component of the cbb3-type cytochrome c oxidase at least composed of CcoN, CcoO, CcoQ and CcoP. Heme c is required as a cofactor.

Its subcellular location is the cell inner membrane. The protein operates within energy metabolism; oxidative phosphorylation. In terms of biological role, C-type cytochrome. Part of the cbb3-type cytochrome c oxidase complex. CcoP subunit is required for transferring electrons from donor cytochrome c via its heme groups to CcoO subunit. From there, electrons are shuttled to the catalytic binuclear center of CcoN subunit where oxygen reduction takes place. The complex also functions as a proton pump. This Helicobacter pylori (Campylobacter pylori) protein is Cbb3-type cytochrome c oxidase subunit CcoP.